The following is a 265-amino-acid chain: Histidine racemase (265 aa).

Cys-67 (proton acceptor) is an active-site residue. Cys-209 acts as the Proton donor in catalysis.

It belongs to the histidine racemase family. Homodimer.

The enzyme catalyses L-histidine = D-histidine. Its activity is regulated as follows. Activity is not affected by buffer composition (PO(4) or Tris), ions (SO(4)(2-), Mg(2+) and EDTA) or the PLP inhibitor hydroxylamine. However, the activity is hindered by iodoacetamide and Hg(2+), which are known inhibitors of enzymes with catalytic thiols. Functionally, cofactor-independent isomerase that catalyzes the reversible conversion of L-histidine to D-histidine. Shows weak activity with L,L-lanthionine. The catalytic turnover is 10'000-fold faster with L-histidine than with L,L-lanthionine. May play a role in growth of F.nucleatum. In Fusobacterium nucleatum subsp. nucleatum (strain ATCC 25586 / DSM 15643 / BCRC 10681 / CIP 101130 / JCM 8532 / KCTC 2640 / LMG 13131 / VPI 4355), this protein is Histidine racemase.